Consider the following 464-residue polypeptide: Protein FAM90A12 (464 aa).

3 disordered regions span residues 1 to 42 (MMAR…DPRL), 70 to 389 (PATL…HDGA), and 411 to 437 (APSF…SEAP). Basic and acidic residues-rich tracts occupy residues 74–89 (GKKE…KPRA) and 97–114 (NKDK…DPQR). Residues 180–197 (LASLSPLRKASLSSSSSL) show a composition bias toward low complexity.

Belongs to the FAM90 family.

This is Protein FAM90A12 from Homo sapiens (Human).